Consider the following 602-residue polypeptide: Prostaglandin G/H synthase 1 (602 aa).

Residues 1 to 26 (MSRRSLSLWFPLLLLLLLPPTPSVLL) form the signal peptide. The region spanning 34 to 72 (PVNPCCYYPCQNQGVCVRFGLDNYQCDCTRTGYSGPNCT) is the EGF-like domain. Intrachain disulfides connect C38/C49, C39/C161, C43/C59, and C61/C71. Residues N70, N106, and N146 are each glycosylated (N-linked (GlcNAc...) asparagine). The Proton acceptor role is filled by H209. Y387 (for cyclooxygenase activity) is an active-site residue. H390 contributes to the heme b binding site. Residues C571 and C577 are joined by a disulfide bond.

This sequence belongs to the prostaglandin G/H synthase family. As to quaternary structure, homodimer. Heme b is required as a cofactor.

Its subcellular location is the microsome membrane. The protein localises to the endoplasmic reticulum membrane. The enzyme catalyses (5Z,8Z,11Z,14Z)-eicosatetraenoate + AH2 + 2 O2 = prostaglandin H2 + A + H2O. It catalyses the reaction (5Z,8Z,11Z,14Z)-eicosatetraenoate + 2 O2 = prostaglandin G2. It carries out the reaction prostaglandin G2 + AH2 = prostaglandin H2 + A + H2O. The catalysed reaction is (9Z,12Z)-octadecadienoate + AH2 + O2 = (9R)-hydroxy-(10E,12Z)-octadecadienoate + A + H2O. The enzyme catalyses (9Z,12Z)-octadecadienoate + AH2 + O2 = (9S)-hydroxy-(10E,12Z)-octadecadienoate + A + H2O. It catalyses the reaction (9Z,12Z)-octadecadienoate + AH2 + O2 = (13S)-hydroxy-(9Z,11E)-octadecadienoate + A + H2O. It carries out the reaction (9Z,12Z)-octadecadienoate + AH2 + O2 = (13R)-hydroxy-(9Z,11E)-octadecadienoate + A + H2O. The protein operates within lipid metabolism; prostaglandin biosynthesis. With respect to regulation, the cyclooxygenase activity is inhibited by nonsteroidal anti-inflammatory drugs (NSAIDs) including ibuprofen, flurbiprofen, ketoprofen, naproxen, flurbiprofen, anirolac, fenclofenac and diclofenac. In terms of biological role, dual cyclooxygenase and peroxidase that plays an important role in the biosynthesis pathway of prostanoids, a class of C20 oxylipins mainly derived from arachidonate ((5Z,8Z,11Z,14Z)-eicosatetraenoate, AA, C20:4(n-6)), with a particular role in the inflammatory response. The cyclooxygenase activity oxygenates AA to the hydroperoxy endoperoxide prostaglandin G2 (PGG2), and the peroxidase activity reduces PGG2 to the hydroxy endoperoxide prostaglandin H2 (PGH2), the precursor of all 2-series prostaglandins and thromboxanes. This complex transformation is initiated by abstraction of hydrogen at carbon 13 (with S-stereochemistry), followed by insertion of molecular O2 to form the endoperoxide bridge between carbon 9 and 11 that defines prostaglandins. The insertion of a second molecule of O2 (bis-oxygenase activity) yields a hydroperoxy group in PGG2 that is then reduced to PGH2 by two electrons. Involved in the constitutive production of prostanoids in particular in the stomach and platelets. In gastric epithelial cells, it is a key step in the generation of prostaglandins, such as prostaglandin E2 (PGE2), which plays an important role in cytoprotection. In platelets, it is involved in the generation of thromboxane A2 (TXA2), which promotes platelet activation and aggregation, vasoconstriction and proliferation of vascular smooth muscle cells. Can also use linoleate (LA, (9Z,12Z)-octadecadienoate, C18:2(n-6)) as substrate and produce hydroxyoctadecadienoates (HODEs) in a regio- and stereospecific manner, being (9R)-HODE ((9R)-hydroxy-(10E,12Z)-octadecadienoate) and (13S)-HODE ((13S)-hydroxy-(9Z,11E)-octadecadienoate) its major products. The sequence is that of Prostaglandin G/H synthase 1 from Mus musculus (Mouse).